The primary structure comprises 392 residues: p21-activated protein kinase-interacting protein 1 (392 aa).

5 WD repeats span residues 40–77 (AHTA…DHGA), 80–118 (HHNG…CLKS), 121–160 (AHKG…SAFI), 202–240 (TNER…CLSE), and 243–284 (AHEN…KVSP). The tract at residues 309–392 (TKESPPAAAE…RKKKKIRMMQ (84 aa)) is disordered. Over residues 325-351 (EQSRRNKEESGHAVQEEEKQPKPDTEK) the composition is skewed to basic and acidic residues. Residues 355–368 (TGDSNKPTRGNSLV) are compositionally biased toward polar residues. Basic residues predominate over residues 381 to 392 (KKRKKKKIRMMQ).

In terms of assembly, interacts with PAK1.

The protein resides in the nucleus. It localises to the nucleolus. Negatively regulates the PAK1 kinase. PAK1 is a member of the PAK kinase family, which has been shown to play a positive role in the regulation of signaling pathways involving MAPK8 and RELA. PAK1 exists as an inactive homodimer, which is activated by binding of small GTPases such as CDC42 to an N-terminal regulatory domain. PAK1IP1 also binds to the N-terminus of PAK1, and inhibits the specific activation of PAK1 by CDC42. May be involved in ribosomal large subunit assembly. The chain is p21-activated protein kinase-interacting protein 1 (PAK1IP1) from Bos taurus (Bovine).